The chain runs to 1046 residues: DNA-directed RNA polymerase subunit beta' (1046 aa).

Mg(2+) is bound by residues aspartate 383, aspartate 385, and aspartate 387. Residues cysteine 752, cysteine 826, cysteine 833, and cysteine 836 each contribute to the Zn(2+) site.

The protein belongs to the RNA polymerase beta' chain family. The RNAP catalytic core consists of 2 alpha, 1 beta, 1 beta' and 1 omega subunit. When a sigma factor is associated with the core the holoenzyme is formed, which can initiate transcription. Mg(2+) serves as cofactor. Zn(2+) is required as a cofactor.

It catalyses the reaction RNA(n) + a ribonucleoside 5'-triphosphate = RNA(n+1) + diphosphate. Functionally, DNA-dependent RNA polymerase catalyzes the transcription of DNA into RNA using the four ribonucleoside triphosphates as substrates. The sequence is that of DNA-directed RNA polymerase subunit beta' from Weissella hellenica.